A 521-amino-acid polypeptide reads, in one-letter code: BAR/IMD domain-containing adapter protein 2 (521 aa).

In terms of domain architecture, IMD spans 1 to 250 (MSLSRSEEMH…VQLMQQMGNS (250 aa)). A coiled-coil region spans residues 132 to 153 (DALDKCQAELKKLRKKSQGSKN). Phosphoserine is present on residues serine 262, serine 324, serine 326, and serine 337. Positions 297 to 370 (APVMNGVSGP…TLPRSSSMAA (74 aa)) are disordered. The segment covering 321-333 (QPKSTSPPQSQSK) has biased composition (low complexity). Residue threonine 341 is modified to Phosphothreonine. A Phosphoserine modification is found at serine 347. Residues 353 to 368 (SYATTENKTLPRSSSM) are compositionally biased toward polar residues. Threonine 361 is modified (phosphothreonine). Residues serine 367, serine 385, serine 396, and serine 455 each carry the phosphoserine modification. Residues 375-438 (NGRMRVKAIF…PFSYTRVLDN (64 aa)) form the SH3 domain. The segment at 450–471 (QGKSSSTGNLLDKEDLALPPPD) is disordered.

Homodimer. Interacts with CDC42 and RAC1 that have been activated by GTP binding. Interacts with ATN1, ADGRB1, DIAPH1, EPS8, SHANK1, SHANK2, SHANK3, TIAM1, WASF1 and WASF2. Interacts with ENAH after recruitment of CDC42. Phosphorylated on tyrosine residues by INSR in response to insulin treatment.

The protein localises to the cytoplasm. It is found in the membrane. Its subcellular location is the cell projection. It localises to the filopodium. The protein resides in the ruffle. The protein localises to the cytoskeleton. Adapter protein that links membrane-bound small G-proteins to cytoplasmic effector proteins. Necessary for CDC42-mediated reorganization of the actin cytoskeleton and for RAC1-mediated membrane ruffling. Involved in the regulation of the actin cytoskeleton by WASF family members and the Arp2/3 complex. Plays a role in neurite growth. Acts syngeristically with ENAH to promote filipodia formation. Plays a role in the reorganization of the actin cytoskeleton in response to bacterial infection. Participates in actin bundling when associated with EPS8, promoting filopodial protrusions. This is BAR/IMD domain-containing adapter protein 2 (BAIAP2) from Bos taurus (Bovine).